The primary structure comprises 269 residues: Mitochondrial scaffolding protein 1 (269 aa).

A PDZ domain is found at 49–121; sequence VVEIEKTSKG…HDEAVEVFRS (73 aa). A disordered region spans residues 143–185; the sequence is RTQTPTASVSITPQVTPQTRSTQNNTDTPKSMSHSESKSRLTS. A compositionally biased stretch (polar residues) spans 145 to 174; it reads QTPTASVSITPQVTPQTRSTQNNTDTPKSM. The helical transmembrane segment at 240-262 threads the bilayer; the sequence is WLTEALYVSIGLGALTISGYLAY.

Its subcellular location is the membrane. Its function is as follows. Plays a role in the regulation of lifespan in a partially daf-16-mediated manner, and may be involved in regulating the levels of reactive oxygen species production in response to heat stress. The polypeptide is Mitochondrial scaffolding protein 1 (Caenorhabditis elegans).